The chain runs to 103 residues: MAVQQKIRIKLKSYDHSLVDKWALRIIDVVKQTDAIIFGPIPLPTKSHVYTVNRSPHVDKKSREQFSFSSHKRLIEIINPTSRTIDMLMKLELPSGVDVEIKS.

The protein belongs to the universal ribosomal protein uS10 family. As to quaternary structure, part of the 30S ribosomal subunit.

In terms of biological role, involved in the binding of tRNA to the ribosomes. The polypeptide is Small ribosomal subunit protein uS10 (Pelodictyon phaeoclathratiforme (strain DSM 5477 / BU-1)).